The following is a 135-amino-acid chain: Fatty acid-binding protein 5 (135 aa).

Alanine 2 carries the post-translational modification N-acetylalanine. Serine 3 carries the phosphoserine modification. The Nuclear localization signal motif lies at 24–34 (KELGVGLALRK). N-eicosanoyl ethanolamine-binding residues include cysteine 43 and arginine 109. Cysteine 120 and cysteine 127 are oxidised to a cystine. 129-131 (RVY) is a binding site for (9Z,12Z)-octadecadienoate. Tyrosine 131 is an N-eicosanoyl ethanolamine binding site. A hexadecanoate-binding site is contributed by tyrosine 131. Phosphotyrosine is present on tyrosine 131.

Belongs to the calycin superfamily. Fatty-acid binding protein (FABP) family. As to quaternary structure, monomer.

The protein resides in the cytoplasm. It is found in the nucleus. It localises to the synapse. Its subcellular location is the postsynaptic density. The protein localises to the secreted. It catalyses the reaction hexadecanoate(out) = hexadecanoate(in). It carries out the reaction (9Z,12Z)-octadecadienoate(out) = (9Z,12Z)-octadecadienoate(in). The catalysed reaction is (9Z)-octadecenoate(out) = (9Z)-octadecenoate(in). In terms of biological role, intracellular carrier for long-chain fatty acids and related active lipids, such as endocannabinoids, that regulate the metabolism and actions of the ligands they bind. In addition to the cytosolic transport, selectively delivers specific fatty acids from the cytosol to the nucleus, wherein they activate nuclear receptors. Delivers retinoic acid to the nuclear receptor peroxisome proliferator-activated receptor delta; which promotes proliferation and survival. May also serve as a synaptic carrier of endocannabinoid at central synapses and thus controls retrograde endocannabinoid signaling. Modulates inflammation by regulating PTGES induction via NF-kappa-B activation, and prostaglandin E2 (PGE2) biosynthesis during inflammation. This chain is Fatty acid-binding protein 5, found in Rattus norvegicus (Rat).